The sequence spans 231 residues: Phosphoribosylformylglycinamidine synthase subunit PurQ (231 aa).

A Glutamine amidotransferase type-1 domain is found at 7-231 (GVVVFPGSNC…RLFASLFRQL (225 aa)). Catalysis depends on cysteine 89, which acts as the Nucleophile. Residues histidine 206 and glutamate 208 contribute to the active site.

In terms of assembly, part of the FGAM synthase complex composed of 1 PurL, 1 PurQ and 2 PurS subunits.

It localises to the cytoplasm. The catalysed reaction is N(2)-formyl-N(1)-(5-phospho-beta-D-ribosyl)glycinamide + L-glutamine + ATP + H2O = 2-formamido-N(1)-(5-O-phospho-beta-D-ribosyl)acetamidine + L-glutamate + ADP + phosphate + H(+). It catalyses the reaction L-glutamine + H2O = L-glutamate + NH4(+). It participates in purine metabolism; IMP biosynthesis via de novo pathway; 5-amino-1-(5-phospho-D-ribosyl)imidazole from N(2)-formyl-N(1)-(5-phospho-D-ribosyl)glycinamide: step 1/2. Functionally, part of the phosphoribosylformylglycinamidine synthase complex involved in the purines biosynthetic pathway. Catalyzes the ATP-dependent conversion of formylglycinamide ribonucleotide (FGAR) and glutamine to yield formylglycinamidine ribonucleotide (FGAM) and glutamate. The FGAM synthase complex is composed of three subunits. PurQ produces an ammonia molecule by converting glutamine to glutamate. PurL transfers the ammonia molecule to FGAR to form FGAM in an ATP-dependent manner. PurS interacts with PurQ and PurL and is thought to assist in the transfer of the ammonia molecule from PurQ to PurL. The polypeptide is Phosphoribosylformylglycinamidine synthase subunit PurQ (Chlorobium luteolum (strain DSM 273 / BCRC 81028 / 2530) (Pelodictyon luteolum)).